The primary structure comprises 192 residues: Imidazoleglycerol-phosphate dehydratase (192 aa).

It belongs to the imidazoleglycerol-phosphate dehydratase family.

The protein resides in the cytoplasm. It catalyses the reaction D-erythro-1-(imidazol-4-yl)glycerol 3-phosphate = 3-(imidazol-4-yl)-2-oxopropyl phosphate + H2O. It participates in amino-acid biosynthesis; L-histidine biosynthesis; L-histidine from 5-phospho-alpha-D-ribose 1-diphosphate: step 6/9. The polypeptide is Imidazoleglycerol-phosphate dehydratase (Caldivirga maquilingensis (strain ATCC 700844 / DSM 13496 / JCM 10307 / IC-167)).